The sequence spans 954 residues: Isoleucine--tRNA ligase (954 aa).

Residues 60–70 carry the 'HIGH' region motif; sequence PYANGALHMGH. Glutamate 564 serves as a coordination point for L-isoleucyl-5'-AMP. Positions 605–609 match the 'KMSKS' region motif; that stretch reads KMSKS. ATP is bound at residue lysine 608. Zn(2+) contacts are provided by cysteine 923, cysteine 926, cysteine 943, and cysteine 946.

This sequence belongs to the class-I aminoacyl-tRNA synthetase family. IleS type 1 subfamily. As to quaternary structure, monomer. Requires Zn(2+) as cofactor.

It is found in the cytoplasm. The enzyme catalyses tRNA(Ile) + L-isoleucine + ATP = L-isoleucyl-tRNA(Ile) + AMP + diphosphate. Catalyzes the attachment of isoleucine to tRNA(Ile). As IleRS can inadvertently accommodate and process structurally similar amino acids such as valine, to avoid such errors it has two additional distinct tRNA(Ile)-dependent editing activities. One activity is designated as 'pretransfer' editing and involves the hydrolysis of activated Val-AMP. The other activity is designated 'posttransfer' editing and involves deacylation of mischarged Val-tRNA(Ile). In Synechococcus sp. (strain ATCC 27144 / PCC 6301 / SAUG 1402/1) (Anacystis nidulans), this protein is Isoleucine--tRNA ligase.